A 754-amino-acid chain; its full sequence is MASLEVFVLYLRIFFISFMSRARSLFSFVTSPAITAEHGKVQKLQAKPGSDRAPDSWIQYRHSKLVDPSTYNDLGLCGGLPLRVHKHAHLADKGARRAQEDWKRLVGPIRNFTGCLSPRFNGIAVAIPECIPERLEAVTYANEFAFLHDDILDTVGKEDGEEENNEMARGFESVLEPSRNVKMSVSGKSQMQAKLILELLDLDESQAMVLLKSWEGLVKGESGSQHFDFQSLDEYLPHRVVNLGQTFWFGIITFAMGLTVSNEEMELTKPITEPAYATLALANDFFSWEKEYVEFQGNPTSGNMANAVWIIMKEHSVDLEEAKVICQDKIRESCEEYRRRKREFELQSAEQVSIDAHRYLSALEFSISGNVVWSQYTERYHFHKPEHWRQVENVDDDGNKSDDSGIAMKDSPESTVVDVEDNVPSTFLNFGSSGTNIRSKKTLVSPVLETKLPEMTNQVVLAPFQYVSSLPSKKVRHHAIDALNIWFSVPEADLNMIKDAIDQLHNASLMLDDIEDNSPLRRGHPSTHMIYGISQTINSANNLFVMSLDTIRQLKSPDCLDVFISELKRLHIGQSLDLFWTSNVQCPTLEEYYKMVDYKTGGLFQMVAKLMGAKSPKSKRKVPDVSTLTTLFGRYFQIRDDYQNLMSKEYTDQKGFCEDLDEGKFSLPLIHCLTTSPNIRLQSILHQRKTMGKMSFETKKLVLDHLEETKSLEYTKEMLDCLHVRLHKELDVLEKQTGVNNFLLRLLLKRLHVK.

The first 24 residues, 1–24, serve as a signal peptide directing secretion; the sequence is MASLEVFVLYLRIFFISFMSRARS. The segment at 58–388 is sesterterpene synthase; that stretch reads IQYRHSKLVD…RYHFHKPEHW (331 aa). Residues Asp-149 and Asp-153 each contribute to the Mg(2+) site. The tract at residues 389–753 is geranylfarnesyl diphosphate synthase; sequence RQVENVDDDG…LRLLLKRLHV (365 aa). Residues 392 to 403 show a composition bias toward basic and acidic residues; that stretch reads ENVDDDGNKSDD. A disordered region spans residues 392-414; the sequence is ENVDDDGNKSDDSGIAMKDSPES. Positions 512 and 516 each coordinate Mg(2+).

The protein in the N-terminal section; belongs to the terpene synthase family. This sequence in the C-terminal section; belongs to the FPP/GGPP synthase family. It depends on Mg(2+) as a cofactor.

The enzyme catalyses (2E,6E,10E,14E)-geranylfarnesyl diphosphate = preasperterpenoid A + diphosphate. The protein operates within secondary metabolite biosynthesis; terpenoid biosynthesis. In terms of biological role, bifunctional sesterterpene synthase; part of the gene cluster that mediates the biosynthesis of the asperterpenoids, sesterterpenes that exhibit anti-tuberculosis activity. The first step of the pathway is performed by the sesterterpene synthase astC that possesses both prenyl transferase and terpene cyclase activity, converting isopentenyl diphosphate and dimethylallyl diphosphate into geranylfarnesyl diphosphate (GFPP) and further converting GFPP into preasperterpenoid A, respectively. The cytochrome P450 monooxygenase astB then dually oxidizes preasperterpenoid A to produce asperterpenoid A along with a minor product, asperterpenoid B. Finally, the cytochrome P450 monooxygenase astA converts asperterpenoid A into asperterpenoid C. This is Bifunctional sesterterpene synthase astC from Talaromyces wortmannii (Penicillium wortmannii).